Reading from the N-terminus, the 325-residue chain is Ribosomal RNA small subunit methyltransferase H (325 aa).

The tract at residues 1–28 (MTASQPLDQADQDSESSSAGSSAAETEH) is disordered. The segment covering 15 to 24 (ESSSAGSSAA) has biased composition (low complexity). Residues 56–58 (GGH), aspartate 82, tyrosine 110, aspartate 131, and glutamine 138 each bind S-adenosyl-L-methionine. The interval 303–325 (TDEEVQANPRSRSAKLRVAKRVE) is disordered. Residues 314 to 325 (RSAKLRVAKRVE) are compositionally biased toward basic residues.

The protein belongs to the methyltransferase superfamily. RsmH family.

Its subcellular location is the cytoplasm. It catalyses the reaction cytidine(1402) in 16S rRNA + S-adenosyl-L-methionine = N(4)-methylcytidine(1402) in 16S rRNA + S-adenosyl-L-homocysteine + H(+). Its function is as follows. Specifically methylates the N4 position of cytidine in position 1402 (C1402) of 16S rRNA. This chain is Ribosomal RNA small subunit methyltransferase H, found in Rhodopirellula baltica (strain DSM 10527 / NCIMB 13988 / SH1).